The primary structure comprises 292 residues: Ribosomal protein L11 methyltransferase (292 aa).

S-adenosyl-L-methionine is bound by residues Thr143, Gly164, Asp186, and Asn228.

Belongs to the methyltransferase superfamily. PrmA family.

Its subcellular location is the cytoplasm. It catalyses the reaction L-lysyl-[protein] + 3 S-adenosyl-L-methionine = N(6),N(6),N(6)-trimethyl-L-lysyl-[protein] + 3 S-adenosyl-L-homocysteine + 3 H(+). In terms of biological role, methylates ribosomal protein L11. This Aeromonas salmonicida (strain A449) protein is Ribosomal protein L11 methyltransferase.